The primary structure comprises 407 residues: Putative glucose/galactose transporter (407 aa).

Transmembrane regions (helical) follow at residues 11-31 (GSLTALFFLMGFITVLNDILI), 47-67 (LIQFCFFGAYFIMGGVFGNVI), 70-90 (IGYPFGVVLGFVITATGCALF), 96-116 (FGSYGFFLGALFILASGIVCL), 139-159 (VQAFNSLGTTLGPIFGSLLIF), 180-200 (VQMPYLGLAVFSLLLALIMYL), 225-245 (FVFGALGIFFYVGGEVAIGSF), 263-283 (HYLVYYWGGAMVGRFLGSVLM), 300-320 (IVLIALAIIIGGKIALFALTF), 321-341 (VGFFNSIMFPTIFSLATLNLG), 349-369 (GVISMAIVGGALIPPIQGAVT), and 378-398 (NLLYAYGVPLLCYFYILFFAL).

It belongs to the major facilitator superfamily. FHS transporter (TC 2.A.1.7) family.

It localises to the cell inner membrane. Intake of glucose and galactose. The sequence is that of Putative glucose/galactose transporter (gluP) from Helicobacter pylori (strain ATCC 700392 / 26695) (Campylobacter pylori).